Here is a 369-residue protein sequence, read N- to C-terminus: Forkhead box protein I2-A (369 aa).

The segment at residues 124-218 is a DNA-binding region (fork-head); the sequence is RPPYSYSSLI…DNGNFRRKRK (95 aa). The tract at residues 215-252 is disordered; sequence RKRKRKSESVGAGFDEDSNEDKKPLALKSLGSDSPQGA.

Localized to the animal hemisphere of early cleavage stage embryos. Zygotic expression is restricted to the dorsal part of the epibranchial placodes of the head within a region located near the tip of the first, second and third visceral pouch.

The protein localises to the nucleus. Functionally, possible transcriptional activator. The sequence is that of Forkhead box protein I2-A (foxi2-a) from Xenopus laevis (African clawed frog).